We begin with the raw amino-acid sequence, 225 residues long: Cytidylate kinase (225 aa).

An ATP-binding site is contributed by 12–20 (GPSGAGKGT).

The protein belongs to the cytidylate kinase family. Type 1 subfamily.

The protein resides in the cytoplasm. The catalysed reaction is CMP + ATP = CDP + ADP. It catalyses the reaction dCMP + ATP = dCDP + ADP. The chain is Cytidylate kinase from Pectobacterium atrosepticum (strain SCRI 1043 / ATCC BAA-672) (Erwinia carotovora subsp. atroseptica).